A 360-amino-acid polypeptide reads, in one-letter code: Phospho-N-acetylmuramoyl-pentapeptide-transferase (360 aa).

The next 10 membrane-spanning stretches (helical) occupy residues 24–44, 69–89, 92–112, 133–153, 158–178, 199–219, 239–259, 263–283, 288–308, and 337–357; these read RAVMAALTALAFSLMFGPWTI, GTPTMGGSLILTAITVSTLLW, WANPYIWILLGVLLATGALGF, MVWQSSVAIIAGLALFYLAAN, ILIVPFFKQIALPLGVVGFLV, GLATFPVVLVAAGLAIFAYVS, VAIFCTAMCGACLGFLWFNAY, VFMGDVGALALGAALGTVAVI, FVLVIMGGLFVVEAVSVMLQV, and QVVVRFWIITIVLVLIGLSTL.

This sequence belongs to the glycosyltransferase 4 family. MraY subfamily. It depends on Mg(2+) as a cofactor.

The protein resides in the cell inner membrane. The catalysed reaction is UDP-N-acetyl-alpha-D-muramoyl-L-alanyl-gamma-D-glutamyl-meso-2,6-diaminopimeloyl-D-alanyl-D-alanine + di-trans,octa-cis-undecaprenyl phosphate = di-trans,octa-cis-undecaprenyl diphospho-N-acetyl-alpha-D-muramoyl-L-alanyl-D-glutamyl-meso-2,6-diaminopimeloyl-D-alanyl-D-alanine + UMP. It functions in the pathway cell wall biogenesis; peptidoglycan biosynthesis. In terms of biological role, catalyzes the initial step of the lipid cycle reactions in the biosynthesis of the cell wall peptidoglycan: transfers peptidoglycan precursor phospho-MurNAc-pentapeptide from UDP-MurNAc-pentapeptide onto the lipid carrier undecaprenyl phosphate, yielding undecaprenyl-pyrophosphoryl-MurNAc-pentapeptide, known as lipid I. The protein is Phospho-N-acetylmuramoyl-pentapeptide-transferase of Neisseria meningitidis serogroup C (strain 053442).